The chain runs to 366 residues: tRNA/tmRNA (uracil-C(5))-methyltransferase (366 aa).

S-adenosyl-L-methionine-binding residues include Q189, Y217, N222, E238, and D298. C323 serves as the catalytic Nucleophile. E357 serves as the catalytic Proton acceptor.

This sequence belongs to the class I-like SAM-binding methyltransferase superfamily. RNA M5U methyltransferase family. TrmA subfamily.

The enzyme catalyses uridine(54) in tRNA + S-adenosyl-L-methionine = 5-methyluridine(54) in tRNA + S-adenosyl-L-homocysteine + H(+). It catalyses the reaction uridine(341) in tmRNA + S-adenosyl-L-methionine = 5-methyluridine(341) in tmRNA + S-adenosyl-L-homocysteine + H(+). Functionally, dual-specificity methyltransferase that catalyzes the formation of 5-methyluridine at position 54 (m5U54) in all tRNAs, and that of position 341 (m5U341) in tmRNA (transfer-mRNA). This is tRNA/tmRNA (uracil-C(5))-methyltransferase from Photorhabdus laumondii subsp. laumondii (strain DSM 15139 / CIP 105565 / TT01) (Photorhabdus luminescens subsp. laumondii).